A 304-amino-acid polypeptide reads, in one-letter code: tRNA pseudouridine synthase B (304 aa).

The active-site Nucleophile is Asp-38.

Belongs to the pseudouridine synthase TruB family. Type 1 subfamily.

The enzyme catalyses uridine(55) in tRNA = pseudouridine(55) in tRNA. In terms of biological role, responsible for synthesis of pseudouridine from uracil-55 in the psi GC loop of transfer RNAs. The protein is tRNA pseudouridine synthase B of Geobacter sulfurreducens (strain ATCC 51573 / DSM 12127 / PCA).